The sequence spans 571 residues: Proline--tRNA ligase (571 aa).

Belongs to the class-II aminoacyl-tRNA synthetase family. ProS type 1 subfamily. As to quaternary structure, homodimer.

It localises to the cytoplasm. It carries out the reaction tRNA(Pro) + L-proline + ATP = L-prolyl-tRNA(Pro) + AMP + diphosphate. Catalyzes the attachment of proline to tRNA(Pro) in a two-step reaction: proline is first activated by ATP to form Pro-AMP and then transferred to the acceptor end of tRNA(Pro). As ProRS can inadvertently accommodate and process non-cognate amino acids such as alanine and cysteine, to avoid such errors it has two additional distinct editing activities against alanine. One activity is designated as 'pretransfer' editing and involves the tRNA(Pro)-independent hydrolysis of activated Ala-AMP. The other activity is designated 'posttransfer' editing and involves deacylation of mischarged Ala-tRNA(Pro). The misacylated Cys-tRNA(Pro) is not edited by ProRS. This Proteus mirabilis (strain HI4320) protein is Proline--tRNA ligase.